Here is a 549-residue protein sequence, read N- to C-terminus: Teichoic acids export ATP-binding protein TagH (549 aa).

Residues 22–243 (DKLKDLFRKQ…YRAFLKEYNQ (222 aa)) enclose the ABC transporter domain. 57–64 (GLNGSGKS) contacts ATP. The segment at 244–549 (MSMEDRKKFQ…EIQSISIVKK (306 aa)) is unknown. The SH3b domain occupies 346 to 415 (ENMYMVKSNG…VSTKFIEPFK (70 aa)).

Belongs to the ABC transporter superfamily. Teichoic acids exporter (TC 3.A.1.104.1) family. As to quaternary structure, the complex is composed of two ATP-binding proteins (TagH) and two transmembrane proteins (TagG).

It is found in the cell membrane. It catalyses the reaction ATP + H2O + teichoic acidSide 1 = ADP + phosphate + teichoic acidSide 2.. In terms of biological role, part of the ABC transporter complex TagGH involved in teichoic acids export. Responsible for energy coupling to the transport system. The polypeptide is Teichoic acids export ATP-binding protein TagH (Bacillus cereus (strain ZK / E33L)).